Here is a 59-residue protein sequence, read N- to C-terminus: UPF0434 protein Sbal_1685 (59 aa).

This sequence belongs to the UPF0434 family.

This chain is UPF0434 protein Sbal_1685, found in Shewanella baltica (strain OS155 / ATCC BAA-1091).